Consider the following 337-residue polypeptide: Glyceraldehyde-3-phosphate dehydrogenase 2, cytosolic (337 aa).

The segment at 1–151 (MGKIKIGING…YTSDVNIVSN (151 aa)) is binding to NAD. NAD(+) contacts are provided by residues 13-14 (RI), D35, and R82. The catalytic stretch occupies residues 152–337 (ASCTTNCLAP…DLIRHMFKTQ (186 aa)). Residues 153–155 (SCT), T184, 213–214 (TG), and R236 contribute to the D-glyceraldehyde 3-phosphate site. The active-site Nucleophile is C154. Position 318 (N318) interacts with NAD(+).

The protein belongs to the glyceraldehyde-3-phosphate dehydrogenase family. In terms of assembly, homotetramer. In terms of tissue distribution, developing seeds, seedling roots and shoots, and embryo.

It localises to the cytoplasm. The enzyme catalyses D-glyceraldehyde 3-phosphate + phosphate + NAD(+) = (2R)-3-phospho-glyceroyl phosphate + NADH + H(+). Its pathway is carbohydrate degradation; glycolysis; pyruvate from D-glyceraldehyde 3-phosphate: step 1/5. In terms of biological role, key enzyme in glycolysis that catalyzes the first step of the pathway by converting D-glyceraldehyde 3-phosphate (G3P) into 3-phospho-D-glyceroyl phosphate. Essential for the maintenance of cellular ATP levels and carbohydrate metabolism. The protein is Glyceraldehyde-3-phosphate dehydrogenase 2, cytosolic (GAPC2) of Zea mays (Maize).